Reading from the N-terminus, the 400-residue chain is Enoyl-[acyl-carrier-protein] reductase [NADH] (400 aa).

Residues 48-53 (GASTGY), 74-75 (FE), 111-112 (DA), and 139-140 (LA) contribute to the NAD(+) site. Tyr-225 serves as a coordination point for substrate. Tyr-235 (proton donor) is an active-site residue. NAD(+) is bound by residues Lys-244 and 273–275 (VVT).

The protein belongs to the TER reductase family. Monomer.

The catalysed reaction is a 2,3-saturated acyl-[ACP] + NAD(+) = a (2E)-enoyl-[ACP] + NADH + H(+). It functions in the pathway lipid metabolism; fatty acid biosynthesis. Functionally, involved in the final reduction of the elongation cycle of fatty acid synthesis (FAS II). Catalyzes the reduction of a carbon-carbon double bond in an enoyl moiety that is covalently linked to an acyl carrier protein (ACP). This is Enoyl-[acyl-carrier-protein] reductase [NADH] from Burkholderia cenocepacia (strain ATCC BAA-245 / DSM 16553 / LMG 16656 / NCTC 13227 / J2315 / CF5610) (Burkholderia cepacia (strain J2315)).